Here is a 514-residue protein sequence, read N- to C-terminus: ATP synthase subunit alpha (514 aa).

Gly-170 to Thr-177 is an ATP binding site.

This sequence belongs to the ATPase alpha/beta chains family. F-type ATPases have 2 components, CF(1) - the catalytic core - and CF(0) - the membrane proton channel. CF(1) has five subunits: alpha(3), beta(3), gamma(1), delta(1), epsilon(1). CF(0) has three main subunits: a(1), b(2) and c(9-12). The alpha and beta chains form an alternating ring which encloses part of the gamma chain. CF(1) is attached to CF(0) by a central stalk formed by the gamma and epsilon chains, while a peripheral stalk is formed by the delta and b chains.

It localises to the cell inner membrane. The catalysed reaction is ATP + H2O + 4 H(+)(in) = ADP + phosphate + 5 H(+)(out). Its function is as follows. Produces ATP from ADP in the presence of a proton gradient across the membrane. The alpha chain is a regulatory subunit. The protein is ATP synthase subunit alpha of Pseudomonas aeruginosa (strain LESB58).